Reading from the N-terminus, the 714-residue chain is DNA ligase (714 aa).

NAD(+) contacts are provided by residues 59-63, 108-109, and E139; these read DYEYD and SL. Residue K141 is the N6-AMP-lysine intermediate of the active site. NAD(+) is bound by residues R162, E200, K325, and K349. Residues C443, C446, C461, and C466 each contribute to the Zn(2+) site. The BRCT domain occupies 624–713; it reads VVENIFEGKT…IPDDLKDKVH (90 aa).

The protein belongs to the NAD-dependent DNA ligase family. LigA subfamily. Requires Mg(2+) as cofactor. The cofactor is Mn(2+).

It carries out the reaction NAD(+) + (deoxyribonucleotide)n-3'-hydroxyl + 5'-phospho-(deoxyribonucleotide)m = (deoxyribonucleotide)n+m + AMP + beta-nicotinamide D-nucleotide.. In terms of biological role, DNA ligase that catalyzes the formation of phosphodiester linkages between 5'-phosphoryl and 3'-hydroxyl groups in double-stranded DNA using NAD as a coenzyme and as the energy source for the reaction. It is essential for DNA replication and repair of damaged DNA. In Persephonella marina (strain DSM 14350 / EX-H1), this protein is DNA ligase.